Here is a 545-residue protein sequence, read N- to C-terminus: Cryptochrome-1 (545 aa).

Residues 3-138 enclose the Photolyase/cryptochrome alpha/beta domain; it reads VNNILWFRHG…KCVEKVSHTL (136 aa). FAD-binding positions include R236, S264, S266, Q307, H374, 406 to 408, C412, and N415; that span reads DAD.

Belongs to the DNA photolyase class-1 family. Interacts with tim and per; promoted by light conditions. FAD serves as cofactor.

The protein localises to the cytoplasm. It localises to the perinuclear region. It is found in the nucleus. In terms of biological role, blue light-dependent regulator that is the input of the circadian feedback loop. Has no photolyase activity for cyclobutane pyrimidine dimers or 6-4 photoproducts. Regulation of expression by light suggests a role in photoreception for locomotor activity rhythms. Functions, together with per, as a transcriptional repressor required for the oscillation of peripheral circadian clocks and for the correct specification of clock cells. Genes directly activated by the transcription factors Clock (Clk) and cycle (cyc) are repressed by cry. In Aedes aegypti (Yellowfever mosquito), this protein is Cryptochrome-1.